The sequence spans 506 residues: RNA-splicing ligase RtcB homolog (506 aa).

Mn(2+) is bound by residues D120, C123, H228, H260, and H354. 227 to 231 contacts GMP; sequence NHYAE. GMP is bound by residues 354–355, 403–406, S410, 429–432, and K505; these read HN, GGTM, and HGAG. The active-site GMP-histidine intermediate is the H429.

Belongs to the RtcB family. As to quaternary structure, catalytic component of the tRNA-splicing ligase complex. Mn(2+) serves as cofactor.

The catalysed reaction is a 3'-end 3'-phospho-ribonucleotide-RNA + a 5'-end dephospho-ribonucleoside-RNA + GTP = a ribonucleotidyl-ribonucleotide-RNA + GMP + diphosphate. It carries out the reaction a 3'-end 2',3'-cyclophospho-ribonucleotide-RNA + a 5'-end dephospho-ribonucleoside-RNA + GTP + H2O = a ribonucleotidyl-ribonucleotide-RNA + GMP + diphosphate + H(+). Its function is as follows. Catalytic subunit of the tRNA-splicing ligase complex that acts by directly joining spliced tRNA halves to mature-sized tRNAs by incorporating the precursor-derived splice junction phosphate into the mature tRNA as a canonical 3',5'-phosphodiester. May act as an RNA ligase with broad substrate specificity, and may function toward other RNAs. The polypeptide is RNA-splicing ligase RtcB homolog (Drosophila melanogaster (Fruit fly)).